Here is a 185-residue protein sequence, read N- to C-terminus: Ribosome-recycling factor (185 aa).

It belongs to the RRF family.

It is found in the cytoplasm. Functionally, responsible for the release of ribosomes from messenger RNA at the termination of protein biosynthesis. May increase the efficiency of translation by recycling ribosomes from one round of translation to another. The polypeptide is Ribosome-recycling factor (Mycobacteroides abscessus (strain ATCC 19977 / DSM 44196 / CCUG 20993 / CIP 104536 / JCM 13569 / NCTC 13031 / TMC 1543 / L948) (Mycobacterium abscessus)).